We begin with the raw amino-acid sequence, 159 residues long: 2-C-methyl-D-erythritol 2,4-cyclodiphosphate synthase (159 aa).

Asp-8 and His-10 together coordinate a divalent metal cation. Residues 8–10 (DVH) and 34–35 (HS) each bind 4-CDP-2-C-methyl-D-erythritol 2-phosphate. An a divalent metal cation-binding site is contributed by His-42. 4-CDP-2-C-methyl-D-erythritol 2-phosphate contacts are provided by residues 56–58 (DIG), 61–65 (FPDTD), 100–106 (AQAPKML), 132–135 (TTTE), Phe-139, and Arg-142.

This sequence belongs to the IspF family. In terms of assembly, homotrimer. Requires a divalent metal cation as cofactor.

The catalysed reaction is 4-CDP-2-C-methyl-D-erythritol 2-phosphate = 2-C-methyl-D-erythritol 2,4-cyclic diphosphate + CMP. It participates in isoprenoid biosynthesis; isopentenyl diphosphate biosynthesis via DXP pathway; isopentenyl diphosphate from 1-deoxy-D-xylulose 5-phosphate: step 4/6. Its function is as follows. Involved in the biosynthesis of isopentenyl diphosphate (IPP) and dimethylallyl diphosphate (DMAPP), two major building blocks of isoprenoid compounds. Catalyzes the conversion of 4-diphosphocytidyl-2-C-methyl-D-erythritol 2-phosphate (CDP-ME2P) to 2-C-methyl-D-erythritol 2,4-cyclodiphosphate (ME-CPP) with a corresponding release of cytidine 5-monophosphate (CMP). The protein is 2-C-methyl-D-erythritol 2,4-cyclodiphosphate synthase of Salmonella choleraesuis (strain SC-B67).